The chain runs to 248 residues: Triosephosphate isomerase (248 aa).

The substrate site is built by Asn11 and Lys13. His95 serves as the catalytic Electrophile. The active-site Proton acceptor is the Glu165.

Belongs to the triosephosphate isomerase family. Homodimer.

It localises to the cytoplasm. It catalyses the reaction D-glyceraldehyde 3-phosphate = dihydroxyacetone phosphate. The catalysed reaction is dihydroxyacetone phosphate = methylglyoxal + phosphate. Its pathway is carbohydrate degradation; glycolysis; D-glyceraldehyde 3-phosphate from glycerone phosphate: step 1/1. It functions in the pathway carbohydrate biosynthesis; gluconeogenesis. In terms of biological role, triosephosphate isomerase is an extremely efficient metabolic enzyme that catalyzes the interconversion between dihydroxyacetone phosphate (DHAP) and D-glyceraldehyde-3-phosphate (G3P) in glycolysis and gluconeogenesis. Its function is as follows. It is also responsible for the non-negligible production of methylglyoxal a reactive cytotoxic side-product that modifies and can alter proteins, DNA and lipids. The sequence is that of Triosephosphate isomerase (tpi1) from Oryzias latipes (Japanese rice fish).